We begin with the raw amino-acid sequence, 365 residues long: MPDSPTLHHNHIIGLENGSLTSNNNHQGMASVSVGQFQYPIWSWLNSLADATFGKRPSSFEFIVNKTRFSSAPVVATIIISYYLLILVGGRIMRNRQPIRLQKIFQYYNLTFSIASAILALLIFEQVAPAIYKHGFFFSICNEKAWTQPLVFLYYCAYISKFLELTDTFFLVLRKKPLQFLHCYHHGATAVLVYTQIVGRTSISWLIIEINLLVHVTMYYYYYLVAKGIRVPWKKWVTRFQIVQFFADLGFIYFAVYTEVAYRLKFYKACMGHCSGHPLAAFCGLATISSYLVLFIVFYHNTYKKNAALKMKAKAAAATKGNSSESSKNADLKRLSKSNASIAEVKCNNIVTNLYPISSGLNNEK.

Residues 1-68 lie on the Lumenal side of the membrane; sequence MPDSPTLHHN…SFEFIVNKTR (68 aa). Asn-17 and Asn-65 each carry an N-linked (GlcNAc...) asparagine glycan. A helical transmembrane segment spans residues 69–89; the sequence is FSSAPVVATIIISYYLLILVG. Topologically, residues 90–111 are cytoplasmic; it reads GRIMRNRQPIRLQKIFQYYNLT. Residues 112–132 form a helical membrane-spanning segment; that stretch reads FSIASAILALLIFEQVAPAIY. Residues 133–149 lie on the Lumenal side of the membrane; that stretch reads KHGFFFSICNEKAWTQP. Residues 150 to 170 traverse the membrane as a helical segment; that stretch reads LVFLYYCAYISKFLELTDTFF. Topologically, residues 171 to 179 are cytoplasmic; sequence LVLRKKPLQ. The chain crosses the membrane as a helical span at residues 180–198; that stretch reads FLHCYHHGATAVLVYTQIV. At 199–204 the chain is on the lumenal side; that stretch reads GRTSIS. Residues 205-225 form a helical membrane-spanning segment; that stretch reads WLIIEINLLVHVTMYYYYYLV. Residues 226–241 are Cytoplasmic-facing; sequence AKGIRVPWKKWVTRFQ. The helical transmembrane segment at 242–262 threads the bilayer; the sequence is IVQFFADLGFIYFAVYTEVAY. Over 263–278 the chain is Lumenal; it reads RLKFYKACMGHCSGHP. The chain crosses the membrane as a helical span at residues 279-299; the sequence is LAAFCGLATISSYLVLFIVFY. The Cytoplasmic portion of the chain corresponds to 300–365; the sequence is HNTYKKNAAL…PISSGLNNEK (66 aa).

This sequence belongs to the ELO family.

The protein localises to the endoplasmic reticulum membrane. It carries out the reaction a very-long-chain acyl-CoA + malonyl-CoA + H(+) = a very-long-chain 3-oxoacyl-CoA + CO2 + CoA. May be involved in the synthesis of very long chain fatty acids. The polypeptide is Putative fatty acid elongase 2 (Schizosaccharomyces pombe (strain 972 / ATCC 24843) (Fission yeast)).